The chain runs to 1059 residues: Tyrosine-protein kinase-like otk (1059 aa).

The signal sequence occupies residues 1–23 (MDMLMMWSICLFVCIFMAPFSCG). Residues 24 to 597 (SGSSSRFIQV…GDGGFLATRA (574 aa)) are Extracellular-facing. 5 Ig-like C2-type domains span residues 28–112 (SRFI…REAS), 113–202 (PTAK…RVMS), 258–377 (PEGL…LAIN), 380–475 (PGIL…VSIN), and 480–570 (PKFS…AVLT). The N-linked (GlcNAc...) asparagine glycan is linked to Asn42. 4 disulfides stabilise this stretch: Cys49–Cys99, Cys141–Cys191, Cys283–Cys366, and Cys411–Cys459. 7 N-linked (GlcNAc...) asparagine glycosylation sites follow: Asn348, Asn429, Asn441, Asn456, Asn469, Asn524, and Asn536. A disulfide bridge links Cys502 with Cys554. Residues 598 to 618 (VLITMTVALAYIVLVVGLMLW) traverse the membrane as a helical segment. The Cytoplasmic segment spans residues 619–1059 (CRYRRQARKA…ALSKAMQNSE (441 aa)). The segment at 639–695 (GGEQAGGEGSTSGNPKASEQEPCLGKQQRNGRNGKSKSNGDPQKSDDTACSQQSRAS) is disordered. The segment covering 665–693 (QQRNGRNGKSKSNGDPQKSDDTACSQQSR) has biased composition (polar residues). A Phosphoserine modification is found at Ser698. The Protein kinase; inactive domain maps to 712-1055 (LSELIQIGRG…QLGAALSKAM (344 aa)). Positions 739-781 (AQANDKDSDNDKQHSNSENGSGGSSGSTTLSTLNEKRRSKTSM) are disordered. A compositionally biased stretch (basic and acidic residues) spans 742 to 753 (NDKDSDNDKQHS).

This sequence belongs to the protein kinase superfamily. Tyr protein kinase family. Insulin receptor subfamily. As to quaternary structure, interacts with plexA; component of a receptor complex that mediates the repulsive signaling in response to Semaphorin ligands.

The protein resides in the cell membrane. In terms of biological role, acts as a calcium-dependent, homophilic cell adhesion molecule that regulates neural recognition during the development of the nervous system. Component of the repulsive Plexin signaling response to regulate motor axon guidance at the embryonic stage. Also component of a receptor complex that is required in the adult visual system to innervate the lamina layer; specific targeting of R1-R6 axons. This is Tyrosine-protein kinase-like otk from Drosophila willistoni (Fruit fly).